We begin with the raw amino-acid sequence, 31 residues long: Cyclotide cter-J (31 aa).

Residues 1-31 constitute a cross-link (cyclopeptide (Gly-Asp)); sequence GTVPCGESCVFIPCITGIAGCSCKNKVCYID. 3 disulfides stabilise this stretch: cysteine 5/cysteine 21, cysteine 9/cysteine 23, and cysteine 14/cysteine 28.

In terms of processing, contains 3 disulfide bonds. This is a cyclic peptide.

In terms of biological role, probably participates in a plant defense mechanism. The chain is Cyclotide cter-J from Clitoria ternatea (Butterfly pea).